The chain runs to 113 residues: Probable protein L3 (113 aa).

This chain is Probable protein L3, found in Bos taurus (Bovine).